The following is an 824-amino-acid chain: E3 ubiquitin-protein ligase TRIM71 (824 aa).

The segment at 23–93 (CPLCKELCGC…PLKLRCPTCD (71 aa)) adopts an RING-type zinc-finger fold. The tract at residues 37-56 (SSNSSTSSSSSQTSNSSSTS) is disordered. A B box-type 1; atypical zinc finger spans residues 147–194 (LSDPQCSSCDEGNPATSHCLDCQEYLCDNCVRAHQRVRLTKDHFIEGL). Zn(2+)-binding residues include C152, C155, C176, H180, C234, H237, C257, and H262. Residues 229 to 270 (ERMDFCQHHDDAVLRFFCDSCTVPICRECSLGRHAGHSFTYL) form a B box-type 2 zinc finger. The stretch at 293-321 (QAIQLSIEKAQAIAEQVELKAKVVQSEVK) forms a coiled coil. One copy of the Filamin repeat lies at 435 to 536 (SSGAFATASK…IEGSPFKVMV (102 aa)). NHL repeat units lie at residues 549 to 592 (MASF…FKPC), 596 to 639 (HHKF…FTFD), 643 to 686 (LLKF…FGPD), 690 to 733 (LNKY…IRPD), 737 to 780 (ARFL…FEPN), and 784 to 824 (LCKF…ILMF).

Belongs to the TRIM/RBCC family.

It localises to the cytoplasm. It is found in the P-body. It carries out the reaction S-ubiquitinyl-[E2 ubiquitin-conjugating enzyme]-L-cysteine + [acceptor protein]-L-lysine = [E2 ubiquitin-conjugating enzyme]-L-cysteine + N(6)-ubiquitinyl-[acceptor protein]-L-lysine.. Its pathway is protein modification; protein ubiquitination. Functionally, E3 ubiquitin-protein ligase that cooperates with the microRNAs (miRNAs) machinery and promotes embryonic stem cells proliferation and maintenance. Binds to miRNAs and participates in post-transcriptional repression of transcripts. Required to maintain proliferation and prevent premature differentiation of neural progenitor cells during early neural development. The polypeptide is E3 ubiquitin-protein ligase TRIM71 (trim71) (Danio rerio (Zebrafish)).